Consider the following 509-residue polypeptide: ATP synthase subunit alpha (509 aa).

ATP is bound at residue 169–176 (GDRQTGKT).

It belongs to the ATPase alpha/beta chains family. In terms of assembly, F-type ATPases have 2 components, CF(1) - the catalytic core - and CF(0) - the membrane proton channel. CF(1) has five subunits: alpha(3), beta(3), gamma(1), delta(1), epsilon(1). CF(0) has three main subunits: a(1), b(2) and c(9-12). The alpha and beta chains form an alternating ring which encloses part of the gamma chain. CF(1) is attached to CF(0) by a central stalk formed by the gamma and epsilon chains, while a peripheral stalk is formed by the delta and b chains.

It is found in the cell inner membrane. The catalysed reaction is ATP + H2O + 4 H(+)(in) = ADP + phosphate + 5 H(+)(out). Functionally, produces ATP from ADP in the presence of a proton gradient across the membrane. The alpha chain is a regulatory subunit. This is ATP synthase subunit alpha from Paramagnetospirillum magneticum (strain ATCC 700264 / AMB-1) (Magnetospirillum magneticum).